The primary structure comprises 337 residues: Protein-methionine-sulfoxide reductase catalytic subunit MsrP (337 aa).

Residues Met-1 to Ala-50 constitute a signal peptide (tat-type signal). Residues Asn-94, Tyr-97–Glu-98, Cys-152, Thr-187, Asn-237, Arg-242, and Ser-253–Lys-255 contribute to the Mo-molybdopterin site.

The protein belongs to the MsrP family. In terms of assembly, heterodimer of a catalytic subunit (MsrP) and a heme-binding subunit (MsrQ). Mo-molybdopterin serves as cofactor. Predicted to be exported by the Tat system. The position of the signal peptide cleavage has not been experimentally proven.

The protein localises to the periplasm. It carries out the reaction L-methionyl-[protein] + a quinone + H2O = L-methionyl-(S)-S-oxide-[protein] + a quinol. The enzyme catalyses L-methionyl-[protein] + a quinone + H2O = L-methionyl-(R)-S-oxide-[protein] + a quinol. Its function is as follows. Part of the MsrPQ system that repairs oxidized periplasmic proteins containing methionine sulfoxide residues (Met-O), using respiratory chain electrons. Thus protects these proteins from oxidative-stress damage caused by reactive species of oxygen and chlorine generated by the host defense mechanisms. MsrPQ is essential for the maintenance of envelope integrity under bleach stress, rescuing a wide series of structurally unrelated periplasmic proteins from methionine oxidation. The catalytic subunit MsrP is non-stereospecific, being able to reduce both (R-) and (S-) diastereoisomers of methionine sulfoxide. The polypeptide is Protein-methionine-sulfoxide reductase catalytic subunit MsrP (Pseudomonas syringae pv. tomato (strain ATCC BAA-871 / DC3000)).